A 228-amino-acid polypeptide reads, in one-letter code: Cytidylate kinase (228 aa).

ATP is bound at residue G11–S19.

Belongs to the cytidylate kinase family. Type 1 subfamily.

It is found in the cytoplasm. It carries out the reaction CMP + ATP = CDP + ADP. The enzyme catalyses dCMP + ATP = dCDP + ADP. The protein is Cytidylate kinase of Mycolicibacterium paratuberculosis (strain ATCC BAA-968 / K-10) (Mycobacterium paratuberculosis).